The sequence spans 363 residues: MSRFLQAEINLKSLIHNFSKIKAHLRNTRVSCKIIAIVKADAYGHGAVEVARVFGLLGVDYLGVAFSEEAIVLREAGIKVPIIVLFDREIEGVFKYNLIPVIFDYRQAEFLSKEASRRGVILPVHIKVETGMGRLGIYENPCETIKKIAQLDNLKIDGVMSHFSRAEDLEWTQEQMKKFSKIREFLHNLGMKPLFHIANSQGLNYKEALFDAVRPGLMLYGYGAEGFIPCMTVKTKLLDIRKLPKGTPISYGGTFVTKKDSLIGVIPVGYADGYFRSLSNKAEVIVRGKRVPVVGTVCMDLTMIDLTDIQEVQIDDEVILLGKTGSEEITASHIAQWAGTIPYEVLTSFGGRARRKYIMEEEE.

The active-site Proton acceptor; specific for D-alanine is lysine 39. Lysine 39 bears the N6-(pyridoxal phosphate)lysine mark. Substrate is bound at residue arginine 134. Tyrosine 251 serves as the catalytic Proton acceptor; specific for L-alanine. Methionine 299 contacts substrate.

Belongs to the alanine racemase family. Pyridoxal 5'-phosphate serves as cofactor.

The enzyme catalyses L-alanine = D-alanine. Its pathway is amino-acid biosynthesis; D-alanine biosynthesis; D-alanine from L-alanine: step 1/1. In terms of biological role, catalyzes the interconversion of L-alanine and D-alanine. May also act on other amino acids. The sequence is that of Alanine racemase (alr) from Thermodesulfovibrio yellowstonii (strain ATCC 51303 / DSM 11347 / YP87).